The sequence spans 148 residues: Meiosis inducing protein mei3 (148 aa).

Residues 1-20 (MSSQNTSNSRHPASSASALP) show a composition bias toward polar residues. Positions 1-96 (MSSQNTSNSR…AQRIEHENKE (96 aa)) are disordered. The span at 21 to 46 (NRTNTARRSTSPRTSTGSSSTNTNTK) shows a compositional bias: low complexity. Positions 75–86 (PMKRTKRVRRTP) are enriched in basic residues.

In terms of biological role, acts as a critical meiotic inducer by binding non-covalently to protein kinase ran1/pat1 inhibiting its enzymatic activity. Inhibits ran1/pat1 by acting as a pseudosubstrate for ran1/pat1 instead of its natural substrate ste11. Inactivation of the ran1/pat1 protein kinase is both necessary and sufficient to divert a vegetative cell from mitotic division to meiotic differentiation. In Schizosaccharomyces pombe (strain 972 / ATCC 24843) (Fission yeast), this protein is Meiosis inducing protein mei3.